A 100-amino-acid polypeptide reads, in one-letter code: NADH-quinone oxidoreductase subunit K (100 aa).

3 helical membrane-spanning segments follow: residues 4–24 (LQHG…GLLV), 28–48 (LLFM…AFIV), and 60–80 (VMYI…LALL).

It belongs to the complex I subunit 4L family. NDH-1 is composed of 13 different subunits. Subunits NuoA, H, J, K, L, M, N constitute the membrane sector of the complex.

It localises to the cell inner membrane. It catalyses the reaction a quinone + NADH + 5 H(+)(in) = a quinol + NAD(+) + 4 H(+)(out). Its function is as follows. NDH-1 shuttles electrons from NADH, via FMN and iron-sulfur (Fe-S) centers, to quinones in the respiratory chain. The immediate electron acceptor for the enzyme in this species is believed to be ubiquinone. Couples the redox reaction to proton translocation (for every two electrons transferred, four hydrogen ions are translocated across the cytoplasmic membrane), and thus conserves the redox energy in a proton gradient. This is NADH-quinone oxidoreductase subunit K from Serratia proteamaculans (strain 568).